Consider the following 1875-residue polypeptide: Protein MLP1 (1875 aa).

The residue at position 2 (Ser-2) is an N-acetylserine. Coiled-coil stretches lie at residues 69-487 (ELKA…IQYL) and 531-1678 (ERLV…SAES). Thr-337 is subject to Phosphothreonine. Ser-379 is modified (phosphoserine). The Required for nuclear localization signature appears at 1496–1565 (QPSNINMEEI…EEKVEERIKS (70 aa)). The segment at 1641 to 1689 (KKSFDEGKQQAMMKTTLLERKLAKMESQLSETKQSAESPPKSVNNVQNP) is disordered. A compositionally biased stretch (polar residues) spans 1667–1688 (SQLSETKQSAESPPKSVNNVQN). Ser-1670 and Ser-1710 each carry phosphoserine. The segment covering 1716-1725 (KLNSKSSSGG) has biased composition (low complexity). Residues 1716–1875 (KLNSKSSSGG…TDKVNDENSI (160 aa)) are disordered. A compositionally biased stretch (polar residues) spans 1728 to 1737 (PFTSPSPNKH). Residue Ser-1733 is modified to Phosphoserine. Basic and acidic residues predominate over residues 1738–1748 (LQNDNDKRESL). The segment covering 1787-1801 (TSNNPAQKDSSNRNV) has biased composition (polar residues). Position 1803 is a phosphoserine (Ser-1803). Composition is skewed to basic and acidic residues over residues 1807-1840 (TEKK…GELK) and 1865-1875 (ETDKVNDENSI). A coiled-coil region spans residues 1834–1866 (DEVGELKNDEDDTTENINESKKIKTEDEEEKET).

In terms of assembly, component of the nuclear pore complex (NPC). NPC constitutes the exclusive means of nucleocytoplasmic transport. NPCs allow the passive diffusion of ions and small molecules and the active, nuclear transport receptor-mediated bidirectional transport of macromolecules such as proteins, RNAs, ribonucleoparticles (RNPs), and ribosomal subunits across the nuclear envelope. Due to its 8-fold rotational symmetry, all subunits are present with 8 copies or multiples thereof. Interacts with NAB2, a hnRNP required for mRNA export. Interacts with MLP2. May be phosphorylated by CDC28.

The protein resides in the nucleus. It localises to the nuclear pore complex. Its function is as follows. Together with the closely related MLP2, involved in the structural and functional organization of perinuclear chromatin. Together with MLP2, associates with the nuclear pore complex and form filamentous structures along the nuclear periphery. Has a role in the localization of Esc1 to nucleolar regions. Together with MLP2, mediates tethering of the some telomeres to the nuclear periphery, probably mediated by YKU70/YKU80 (HDF1/HDF2) heterodimer and show perinuclear location dependent silencing. MLP1 and MLP2 are involved in telomere length regulation but not silencing or telomere anchoring. Recognizes the 5'-splice site of pre-mRNAs and retains unspliced pre-mRNA in the nucleus without affecting splicing itself. The chain is Protein MLP1 (MLP1) from Saccharomyces cerevisiae (strain ATCC 204508 / S288c) (Baker's yeast).